A 190-amino-acid polypeptide reads, in one-letter code: Nucleoside triphosphate pyrophosphatase (190 aa).

D69 functions as the Proton acceptor in the catalytic mechanism.

Belongs to the Maf family. It depends on a divalent metal cation as a cofactor.

Its subcellular location is the cytoplasm. It carries out the reaction a ribonucleoside 5'-triphosphate + H2O = a ribonucleoside 5'-phosphate + diphosphate + H(+). The catalysed reaction is a 2'-deoxyribonucleoside 5'-triphosphate + H2O = a 2'-deoxyribonucleoside 5'-phosphate + diphosphate + H(+). Its function is as follows. Nucleoside triphosphate pyrophosphatase. May have a dual role in cell division arrest and in preventing the incorporation of modified nucleotides into cellular nucleic acids. This Helicobacter pylori (strain HPAG1) protein is Nucleoside triphosphate pyrophosphatase.